A 24-amino-acid chain; its full sequence is 33.0 kDa cold shock protein (24 aa).

The protein belongs to the thaumatin family. Homooligomer; disulfide-linked. Glycosylated.

It localises to the secreted. Its subcellular location is the extracellular space. It is found in the apoplast. The polypeptide is 33.0 kDa cold shock protein (Arachis hypogaea (Peanut)).